Reading from the N-terminus, the 267-residue chain is Undecaprenyl-diphosphatase (267 aa).

7 helical membrane-spanning segments follow: residues 1 to 21 (MSLF…FLPI), 40 to 60 (GQAI…LYFW), 85 to 105 (LAFL…FLEV), 112 to 132 (LRSI…LYWA), 189 to 209 (AMLM…AEVI), 219 to 239 (DGAI…TLMF), and 245 to 265 (VSFT…LVIA).

Belongs to the UppP family.

It localises to the cell inner membrane. It carries out the reaction di-trans,octa-cis-undecaprenyl diphosphate + H2O = di-trans,octa-cis-undecaprenyl phosphate + phosphate + H(+). Functionally, catalyzes the dephosphorylation of undecaprenyl diphosphate (UPP). Confers resistance to bacitracin. The chain is Undecaprenyl-diphosphatase from Jannaschia sp. (strain CCS1).